The sequence spans 369 residues: Putative cyclin-F1-1 (369 aa).

The disordered stretch occupies residues Ala-328–Asp-350.

It belongs to the cyclin family. Cyclin F subfamily.

The sequence is that of Putative cyclin-F1-1 (CYCF1-1) from Oryza sativa subsp. japonica (Rice).